We begin with the raw amino-acid sequence, 510 residues long: Histidine ammonia-lyase (510 aa).

The 5-imidazolinone (Ala-Gly) cross-link spans 143 to 145 (ASG). A 2,3-didehydroalanine (Ser) modification is found at serine 144.

This sequence belongs to the PAL/histidase family. Post-translationally, contains an active site 4-methylidene-imidazol-5-one (MIO), which is formed autocatalytically by cyclization and dehydration of residues Ala-Ser-Gly.

The protein localises to the cytoplasm. The catalysed reaction is L-histidine = trans-urocanate + NH4(+). The protein operates within amino-acid degradation; L-histidine degradation into L-glutamate; N-formimidoyl-L-glutamate from L-histidine: step 1/3. This chain is Histidine ammonia-lyase, found in Shewanella sediminis (strain HAW-EB3).